The sequence spans 378 residues: Cyclic GMP-AMP synthase-like receptor 1 (378 aa).

Residues glutamate 71, aspartate 73, and aspartate 187 each contribute to the Mg(2+) site. Residue 71–73 (EFD) coordinates ATP. Residues aspartate 187 and 233 to 240 (TSSFYEAE) contribute to the GTP site. ATP contacts are provided by residues 237-240 (YEAE), lysine 258, and 271-275 (SYHIK).

The protein belongs to the mab-21 family. Mg(2+) serves as cofactor. It depends on Mn(2+) as a cofactor.

It catalyses the reaction GTP + ATP = 3',2'-cGAMP + 2 diphosphate. The enzyme catalyses GTP + ATP = pppA(2'-5')pG + diphosphate. It carries out the reaction pppA(2'-5')pG = 3',2'-cGAMP + diphosphate. With respect to regulation, the enzyme activity is specifically activated by double-stranded RNA (dsRNA). Recognizes long dsRNA (&gt;30 bp) with no preference for 5' RNA phosphorylation. Its function is as follows. Nucleotidyltransferase that catalyzes the formation of cyclic GMP-AMP (3',2'-cGAMP) from ATP and GTP and plays a key role in antiviral innate immunity. Synthesizes 3',2'-cGAMP in a two-step reaction through production of the linear intermediate pppA(2'-5')pG. Acts as a key sensor of double-stranded RNA (dsRNA), the presence of dsRNA in the cytoplasm being a danger signal that triggers the immune responses. Directly binds dsRNA, activating the nucleotidyltransferase activity, leading to synthesis of 3',2'-cGAMP, a second messenger that binds to and activates Sting, thereby triggering the antiviral immune response via activation of the NF-kappa-B transcription factor Rel (Relish). 3',2'-cGAMP is protected from poxin cleavage. In Drosophila melanogaster (Fruit fly), this protein is Cyclic GMP-AMP synthase-like receptor 1.